The chain runs to 303 residues: Recombination-associated protein RdgC (303 aa).

The protein belongs to the RdgC family.

The protein localises to the cytoplasm. Its subcellular location is the nucleoid. Its function is as follows. May be involved in recombination. In Shewanella halifaxensis (strain HAW-EB4), this protein is Recombination-associated protein RdgC.